Consider the following 153-residue polypeptide: Peptide deformylase (153 aa).

Residues Cys87 and His129 each coordinate Fe cation. Glu130 is a catalytic residue. His133 serves as a coordination point for Fe cation.

It belongs to the polypeptide deformylase family. Fe(2+) is required as a cofactor.

It carries out the reaction N-terminal N-formyl-L-methionyl-[peptide] + H2O = N-terminal L-methionyl-[peptide] + formate. Removes the formyl group from the N-terminal Met of newly synthesized proteins. Requires at least a dipeptide for an efficient rate of reaction. N-terminal L-methionine is a prerequisite for activity but the enzyme has broad specificity at other positions. This chain is Peptide deformylase, found in Dictyoglomus turgidum (strain DSM 6724 / Z-1310).